The primary structure comprises 245 residues: Complement C1q subcomponent subunit C (245 aa).

Residues 1 to 28 (MVVGTSCQPQHGLYLLLLLLALPLRSQA) form the signal peptide. The 82-residue stretch at 31 to 112 (GCYGIPGMPG…GPPGEPGEEG (82 aa)) folds into the Collagen-like domain. Residues proline 36, proline 39, proline 42, proline 45, and proline 63 each carry the 4-hydroxyproline modification. Residues 42 to 119 (PGTPGKDGHD…EEGRYKQKHQ (78 aa)) are disordered. Lysine 75 is subject to 5-hydroxylysine. O-linked (Gal...) hydroxylysine glycosylation is present at lysine 75. 4-hydroxyproline is present on residues proline 81, proline 96, proline 99, and proline 105. Over residues 98–107 (DPGPRGPPGE) the composition is skewed to pro residues. The C1q domain occupies 115-245 (KQKHQSVFTV…VFSGFLLFPD (131 aa)). A disulfide bond links cysteine 179 and cysteine 193.

Core component of the complement C1 complex, a calcium-dependent complex composed of 1 molecule of the C1Q subcomplex, 2 molecules of C1R and 2 molecules of C1S. The C1Q subcomplex is composed 18 subunits: 3 chains of C1QA, C1QB, and C1QC trimerize to form 6 collagen-like triple helices connected to six globular ligand-recognition modules (C1q domain). Post-translationally, O-linked glycans consist of Glc-Gal disaccharides bound to the oxygen atom of post-translationally added hydroxyl groups.

Its subcellular location is the secreted. It is found in the cell surface. The C1Q subcomplex is inhibited by sulfated molecules, such as triterpenoid sulfates, heparan sulfate, or chondroitin sulfates. Functionally, core component of the complement C1 complex, a multiprotein complex that initiates the classical pathway of the complement system, a cascade of proteins that leads to phagocytosis and breakdown of pathogens and signaling that strengthens the adaptive immune system. The classical complement pathway is initiated by the C1Q subcomplex of the C1 complex, which specifically binds IgG or IgM immunoglobulins complexed with antigens, forming antigen-antibody complexes on the surface of pathogens: C1QA, together with C1QB and C1QC, specifically recognizes and binds the Fc regions of IgG or IgM via its C1q domain. Immunoglobulin-binding activates the proenzyme C1R, which cleaves C1S, initiating the proteolytic cascade of the complement system. The C1Q subcomplex is activated by a hexamer of IgG complexed with antigens, while it is activated by a pentameric IgM. The C1Q subcomplex also recognizes and binds phosphatidylserine exposed on the surface of cells undergoing programmed cell death, possibly promoting activation of the complement system. The sequence is that of Complement C1q subcomponent subunit C from Rattus norvegicus (Rat).